Reading from the N-terminus, the 230-residue chain is Ribose-5-phosphate isomerase A (230 aa).

Substrate is bound by residues 29-32 (TGST), 85-88 (DGAD), and 98-101 (KGGG). The active-site Proton acceptor is the Glu107. A substrate-binding site is contributed by Lys125.

Belongs to the ribose 5-phosphate isomerase family. Homodimer.

The enzyme catalyses aldehydo-D-ribose 5-phosphate = D-ribulose 5-phosphate. Its pathway is carbohydrate degradation; pentose phosphate pathway; D-ribose 5-phosphate from D-ribulose 5-phosphate (non-oxidative stage): step 1/1. Functionally, catalyzes the reversible conversion of ribose-5-phosphate to ribulose 5-phosphate. The protein is Ribose-5-phosphate isomerase A of Staphylococcus epidermidis (strain ATCC 35984 / DSM 28319 / BCRC 17069 / CCUG 31568 / BM 3577 / RP62A).